The following is a 334-amino-acid chain: N-acetyl-gamma-glutamyl-phosphate reductase (334 aa).

Cys-154 is a catalytic residue.

The protein belongs to the NAGSA dehydrogenase family. Type 1 subfamily.

It is found in the cytoplasm. It carries out the reaction N-acetyl-L-glutamate 5-semialdehyde + phosphate + NADP(+) = N-acetyl-L-glutamyl 5-phosphate + NADPH + H(+). The protein operates within amino-acid biosynthesis; L-arginine biosynthesis; N(2)-acetyl-L-ornithine from L-glutamate: step 3/4. Functionally, catalyzes the NADPH-dependent reduction of N-acetyl-5-glutamyl phosphate to yield N-acetyl-L-glutamate 5-semialdehyde. The chain is N-acetyl-gamma-glutamyl-phosphate reductase from Shigella flexneri.